Reading from the N-terminus, the 256-residue chain is Glutamate racemase (256 aa).

Substrate-binding positions include 11 to 12 and 43 to 44; these read DS and YG. The active-site Proton donor/acceptor is the Cys-74. Residue 75-76 participates in substrate binding; it reads NT. The active-site Proton donor/acceptor is Cys-182. 183-184 contributes to the substrate binding site; sequence TH.

This sequence belongs to the aspartate/glutamate racemases family.

The catalysed reaction is L-glutamate = D-glutamate. It functions in the pathway cell wall biogenesis; peptidoglycan biosynthesis. Provides the (R)-glutamate required for cell wall biosynthesis. The chain is Glutamate racemase from Leptospira interrogans serogroup Icterohaemorrhagiae serovar Lai (strain 56601).